Reading from the N-terminus, the 328-residue chain is GMP reductase (328 aa).

The Thioimidate intermediate role is filled by Cys-176. NADP(+) is bound at residue Ile-205–Ile-228.

This sequence belongs to the IMPDH/GMPR family. GuaC type 2 subfamily.

It carries out the reaction IMP + NH4(+) + NADP(+) = GMP + NADPH + 2 H(+). Catalyzes the irreversible NADPH-dependent deamination of GMP to IMP. It functions in the conversion of nucleobase, nucleoside and nucleotide derivatives of G to A nucleotides, and in maintaining the intracellular balance of A and G nucleotides. In Streptococcus pneumoniae serotype 2 (strain D39 / NCTC 7466), this protein is GMP reductase.